Here is a 460-residue protein sequence, read N- to C-terminus: UDP-N-acetylmuramate--L-alanine ligase (460 aa).

Position 112–118 (112–118 (GTHGKTT)) interacts with ATP.

This sequence belongs to the MurCDEF family.

The protein resides in the cytoplasm. It catalyses the reaction UDP-N-acetyl-alpha-D-muramate + L-alanine + ATP = UDP-N-acetyl-alpha-D-muramoyl-L-alanine + ADP + phosphate + H(+). It functions in the pathway cell wall biogenesis; peptidoglycan biosynthesis. In terms of biological role, cell wall formation. The chain is UDP-N-acetylmuramate--L-alanine ligase from Pelobacter propionicus (strain DSM 2379 / NBRC 103807 / OttBd1).